A 134-amino-acid polypeptide reads, in one-letter code: Small ribosomal subunit protein uS11 (134 aa).

The protein belongs to the universal ribosomal protein uS11 family. As to quaternary structure, part of the 30S ribosomal subunit. Interacts with proteins S7 and S18. Binds to IF-3.

Located on the platform of the 30S subunit, it bridges several disparate RNA helices of the 16S rRNA. Forms part of the Shine-Dalgarno cleft in the 70S ribosome. This chain is Small ribosomal subunit protein uS11, found in Micrococcus luteus (strain ATCC 4698 / DSM 20030 / JCM 1464 / CCM 169 / CCUG 5858 / IAM 1056 / NBRC 3333 / NCIMB 9278 / NCTC 2665 / VKM Ac-2230) (Micrococcus lysodeikticus).